A 194-amino-acid polypeptide reads, in one-letter code: MEVILLERIENLGFMGDIVKVKDGYARNFLLPQKKALRKSKSNLEYFNAQKVELEALNLKRKGEAEAVAVKLDGLNLVMVRQAGESGQLYGSVSARDITDSLKAEGFVIARSQVLLNHPIKDLGRYETRVSLHPEVIVTITVVVARSEAEAQASAAAAAALLERPEDAEEAVANEEEAEAALLDDEDADEYEQG.

The disordered stretch occupies residues 165 to 194 (PEDAEEAVANEEEAEAALLDDEDADEYEQG). Acidic residues predominate over residues 166–194 (EDAEEAVANEEEAEAALLDDEDADEYEQG).

Belongs to the bacterial ribosomal protein bL9 family.

Functionally, binds to the 23S rRNA. In Rhodospirillum rubrum (strain ATCC 11170 / ATH 1.1.1 / DSM 467 / LMG 4362 / NCIMB 8255 / S1), this protein is Large ribosomal subunit protein bL9.